The chain runs to 327 residues: Fe-S cluster assembly protein DRE2 (327 aa).

Over residues 1–14 (MSPATVTIDTTPDF) the composition is skewed to polar residues. 2 disordered regions span residues 1–20 (MSPA…GGAP) and 153–179 (NKGE…AAAA). The segment at 17-144 (GGAPHSTLLL…EKPAEEVAAV (128 aa)) is N-terminal SAM-like domain. The tract at residues 145 to 214 (PLKFLKKKNK…EDELMTEEDL (70 aa)) is linker. A compositionally biased stretch (low complexity) spans 164–179 (PAAATQPTAPAPAAAA). [2Fe-2S] cluster-binding residues include C224, C235, C238, and C240. Positions 224 to 240 (CAPKPGKKRRACKDCTC) are fe-S binding site A. [4Fe-4S] cluster is bound by residues C290, C293, C301, and C304. 2 short sequence motifs (cx2C motif) span residues 290–293 (CGSC) and 301–304 (CADC). The tract at residues 290-304 (CGSCALGDAFRCADC) is fe-S binding site B.

The protein belongs to the anamorsin family. As to quaternary structure, monomer. Interacts with TAH18. Interacts with MIA40. [2Fe-2S] cluster is required as a cofactor. Requires [4Fe-4S] cluster as cofactor.

Its subcellular location is the cytoplasm. The protein localises to the mitochondrion intermembrane space. Component of the cytosolic iron-sulfur (Fe-S) protein assembly (CIA) machinery required for the maturation of extramitochondrial Fe-S proteins. Part of an electron transfer chain functioning in an early step of cytosolic Fe-S biogenesis, facilitating the de novo assembly of a [4Fe-4S] cluster on the scaffold complex CFD1-NBP35. Electrons are transferred to DRE2 from NADPH via the FAD- and FMN-containing protein TAH18. TAH18-DRE2 are also required for the assembly of the diferric tyrosyl radical cofactor of ribonucleotide reductase (RNR), probably by providing electrons for reduction during radical cofactor maturation in the catalytic small subunit RNR2. In Pyricularia oryzae (strain 70-15 / ATCC MYA-4617 / FGSC 8958) (Rice blast fungus), this protein is Fe-S cluster assembly protein DRE2.